We begin with the raw amino-acid sequence, 409 residues long: uncharacterized protein (409 aa).

A run of 10 helical transmembrane segments spans residues Ala18–Val38, Gly47–Gly67, Val100–Ile120, Val159–Tyr179, Ala180–Leu200, Phe232–Leu252, Gly260–Leu280, Ile302–Gly322, Gly355–Leu375, and Ile380–Ala400.

It is found in the cell membrane. This is an uncharacterized protein from Mycobacterium tuberculosis (strain CDC 1551 / Oshkosh).